The chain runs to 469 residues: UDP-N-acetylmuramate--L-alanine ligase (469 aa).

112-118 lines the ATP pocket; the sequence is GTHGKTT.

Belongs to the MurCDEF family.

The protein localises to the cytoplasm. The catalysed reaction is UDP-N-acetyl-alpha-D-muramate + L-alanine + ATP = UDP-N-acetyl-alpha-D-muramoyl-L-alanine + ADP + phosphate + H(+). Its pathway is cell wall biogenesis; peptidoglycan biosynthesis. In terms of biological role, cell wall formation. In Methylibium petroleiphilum (strain ATCC BAA-1232 / LMG 22953 / PM1), this protein is UDP-N-acetylmuramate--L-alanine ligase.